The chain runs to 880 residues: Valine--tRNA ligase (880 aa).

The 'HIGH' region signature appears at 49 to 59; it reads PNVTGKLHLGH. The short motif at 525-529 is the 'KMSKS' region element; the sequence is KMSKS. Residue K528 coordinates ATP. Residues 809 to 880 adopt a coiled-coil conformation; the sequence is LEGLINIDEE…VEKRIAELKN (72 aa).

This sequence belongs to the class-I aminoacyl-tRNA synthetase family. ValS type 1 subfamily. In terms of assembly, monomer.

It localises to the cytoplasm. The enzyme catalyses tRNA(Val) + L-valine + ATP = L-valyl-tRNA(Val) + AMP + diphosphate. In terms of biological role, catalyzes the attachment of valine to tRNA(Val). As ValRS can inadvertently accommodate and process structurally similar amino acids such as threonine, to avoid such errors, it has a 'posttransfer' editing activity that hydrolyzes mischarged Thr-tRNA(Val) in a tRNA-dependent manner. In Bacillus licheniformis (strain ATCC 14580 / DSM 13 / JCM 2505 / CCUG 7422 / NBRC 12200 / NCIMB 9375 / NCTC 10341 / NRRL NRS-1264 / Gibson 46), this protein is Valine--tRNA ligase.